We begin with the raw amino-acid sequence, 977 residues long: Protein bicaudal C homolog 1 (977 aa).

The disordered stretch occupies residues 1 to 43 (MASQSEPGYLAAAQSDPGSNSERSTDSPVAGSEDDLVAAAPLL). Ser-27, Ser-32, and Ser-45 each carry phosphoserine. KH domains follow at residues 134-201 (RVTL…RARI) and 286-350 (PVST…RQYL). Position 400 is an N6-acetyllysine (Lys-400). The segment covering 590–621 (SLGEKVLSSNHGDPSMQTAGPEQASPKSNSVE) has biased composition (polar residues). 3 disordered regions span residues 590 to 622 (SLGE…SVEG), 667 to 702 (GTKN…GSER), and 794 to 848 (EGSS…KSRE). Ser-614 and Ser-681 each carry phosphoserine. Residues 692-702 (LADKKAPGSER) are compositionally biased toward basic and acidic residues. The span at 794 to 803 (EGSSLSLSRS) shows a compositional bias: low complexity. An SAM domain is found at 875 to 938 (FKGSDLPELF…LLAISELSKN (64 aa)).

This sequence belongs to the BicC family. As to quaternary structure, interacts (via KH domains) with ANKS6 (via SAM domain) in an RNA-dependent manner. Interacts with ANKS3. In terms of tissue distribution, in the adult, predominantly expressed in heart and kidney. In 8 week old mice, expressed in growing primary oocytes and in the stromal cells of the theca.

The protein localises to the cytoplasm. Functionally, putative RNA-binding protein. May be involved in regulating gene expression during embryonic development. This is Protein bicaudal C homolog 1 (Bicc1) from Mus musculus (Mouse).